A 265-amino-acid chain; its full sequence is MKIGIDAGGTLIKIVQEHDNRRYYRTELTTNIQKVIDWLNNEEIETLKLTGGNAGVIADQIHHSPEIFVEFDASSKGLEILLDEQGHQIEHYIFANVGTGTSFHYFDGKDQQRVGGVGTGGGMIQGLGYLLSNITDYKELTNLAQNGDRDAIDLKVKHIYKDTEPPIPGDLTAANFGNVLHHLDNQFTSANKLASAIGVVGEVITTMAITLAREYKTKHVVYIGSSFNNNQLLREVVENYTVLRGFKPYYIENGAFSGALGALYL.

6-13 (DAGGTLIK) contacts ATP. The active-site Proton acceptor is the Glu70. ATP is bound by residues Thr99, 121–125 (GGMIQ), Tyr137, and Ser225.

The protein belongs to the type II pantothenate kinase family. Homodimer.

The protein resides in the cytoplasm. It carries out the reaction (R)-pantothenate + ATP = (R)-4'-phosphopantothenate + ADP + H(+). Its pathway is cofactor biosynthesis; coenzyme A biosynthesis; CoA from (R)-pantothenate: step 1/5. Catalyzes the phosphorylation of pantothenate (Pan), the first step in CoA biosynthesis. The polypeptide is Type II pantothenate kinase (Staphylococcus epidermidis (strain ATCC 35984 / DSM 28319 / BCRC 17069 / CCUG 31568 / BM 3577 / RP62A)).